The primary structure comprises 449 residues: Phosphoglucosamine mutase (449 aa).

S101 (phosphoserine intermediate) is an active-site residue. S101, D241, D243, and D245 together coordinate Mg(2+). A Phosphoserine modification is found at S101.

The protein belongs to the phosphohexose mutase family. The cofactor is Mg(2+). In terms of processing, activated by phosphorylation.

The catalysed reaction is alpha-D-glucosamine 1-phosphate = D-glucosamine 6-phosphate. Its function is as follows. Catalyzes the conversion of glucosamine-6-phosphate to glucosamine-1-phosphate. This is Phosphoglucosamine mutase from Alkaliphilus oremlandii (strain OhILAs) (Clostridium oremlandii (strain OhILAs)).